Here is a 296-residue protein sequence, read N- to C-terminus: Small ribosomal subunit protein uS2 (296 aa).

Disordered stretches follow at residues 1–24 and 270–296; these read MNTKKEEVVSSPEATVEKKQTQSQ and HELKKSEEASEVKAASTKEKLTEEASQ.

It belongs to the universal ribosomal protein uS2 family.

This Mycoplasmopsis synoviae (strain 53) (Mycoplasma synoviae) protein is Small ribosomal subunit protein uS2.